The following is a 101-amino-acid chain: Small ribosomal subunit protein uS14 (101 aa).

This sequence belongs to the universal ribosomal protein uS14 family. As to quaternary structure, part of the 30S ribosomal subunit. Contacts proteins S3 and S10.

In terms of biological role, binds 16S rRNA, required for the assembly of 30S particles and may also be responsible for determining the conformation of the 16S rRNA at the A site. This is Small ribosomal subunit protein uS14 from Acinetobacter baumannii (strain AB307-0294).